An 898-amino-acid polypeptide reads, in one-letter code: DNA mismatch repair protein MutS (898 aa).

646–653 serves as a coordination point for ATP; sequence GPNMGGKS.

Belongs to the DNA mismatch repair MutS family.

Its function is as follows. This protein is involved in the repair of mismatches in DNA. It is possible that it carries out the mismatch recognition step. This protein has a weak ATPase activity. The chain is DNA mismatch repair protein MutS from Brucella ovis (strain ATCC 25840 / 63/290 / NCTC 10512).